A 720-amino-acid chain; its full sequence is Heat shock protein homolog pss1 (720 aa).

Ser-38 is modified (phosphoserine). Thr-39 carries the post-translational modification Phosphothreonine. A compositionally biased stretch (basic and acidic residues) spans 658–690 (KRQKVQAEREAAKAATKSEAEKQKPSGKFEEGT). Residues 658–720 (KRQKVQAERE…ETMEIDEQKE (63 aa)) are disordered. The segment covering 703 to 720 (VAPENEEVETMEIDEQKE) has biased composition (acidic residues).

It belongs to the heat shock protein 70 family.

The protein resides in the cytoplasm. In terms of biological role, required for normal growth at various temperatures. The protein is Heat shock protein homolog pss1 (pss1) of Schizosaccharomyces pombe (strain 972 / ATCC 24843) (Fission yeast).